Here is a 391-residue protein sequence, read N- to C-terminus: Histidinol-phosphate aminotransferase (391 aa).

Residue K248 is modified to N6-(pyridoxal phosphate)lysine.

The protein belongs to the class-II pyridoxal-phosphate-dependent aminotransferase family. Histidinol-phosphate aminotransferase subfamily. In terms of assembly, homodimer. Pyridoxal 5'-phosphate is required as a cofactor.

The enzyme catalyses L-histidinol phosphate + 2-oxoglutarate = 3-(imidazol-4-yl)-2-oxopropyl phosphate + L-glutamate. It functions in the pathway amino-acid biosynthesis; L-histidine biosynthesis; L-histidine from 5-phospho-alpha-D-ribose 1-diphosphate: step 7/9. The chain is Histidinol-phosphate aminotransferase from Shewanella oneidensis (strain ATCC 700550 / JCM 31522 / CIP 106686 / LMG 19005 / NCIMB 14063 / MR-1).